Reading from the N-terminus, the 186-residue chain is Allergen Fel d 4 (186 aa).

The N-terminal stretch at 1-15 (MKLLLLCLGLILVCA) is a signal peptide. Asparagine 51 and asparagine 66 each carry an N-linked (GlcNAc...) asparagine glycan. Cysteine 81 and cysteine 171 are joined by a disulfide.

Belongs to the calycin superfamily. Lipocalin family. As to expression, abundant in urine (at protein level).

It is found in the secreted. In terms of biological role, may be a pheromone carrier. Acts as a kairomone, detected by the prey vomeronasal organ and inducing fear reactions in mice. In Felis catus (Cat), this protein is Allergen Fel d 4.